Here is a 92-residue protein sequence, read N- to C-terminus: MQVSTAALAVLLCTMALCNQFSASLAADTPTACCFSYISRQIPQNFIADYFETSSQCSKPSVIFLTKRGRQVCADPSEEWVQKYVSDLELSA.

The signal sequence occupies residues 1 to 23 (MQVSTAALAVLLCTMALCNQFSA). 2 cysteine pairs are disulfide-bonded: cysteine 33–cysteine 57 and cysteine 34–cysteine 73.

The protein belongs to the intercrine beta (chemokine CC) family. In terms of assembly, self-associates. Also heterodimer of MIP-1-alpha(4-69) and MIP-1-beta(3-69). Interacts with CCR1.

Its subcellular location is the secreted. Functionally, monokine with inflammatory and chemokinetic properties. Binds to CCR1, CCR4 and CCR5. One of the major HIV-suppressive factors produced by CD8+ T-cells. Recombinant MIP-1-alpha induces a dose-dependent inhibition of different strains of HIV-1, HIV-2, and simian immunodeficiency virus (SIV). This is C-C motif chemokine 3 (CCL3) from Pan troglodytes (Chimpanzee).